A 57-amino-acid chain; its full sequence is UPF0391 membrane protein RPA3505 (57 aa).

Transmembrane regions (helical) follow at residues 4-24 (WVVT…GGIA) and 30-50 (IAKI…VISI).

This sequence belongs to the UPF0391 family.

The protein resides in the cell membrane. This is UPF0391 membrane protein RPA3505 from Rhodopseudomonas palustris (strain ATCC BAA-98 / CGA009).